The following is a 396-amino-acid chain: Multidrug efflux protein YfmO (396 aa).

A run of 12 helical transmembrane segments spans residues 20–40 (VWAV…VDPI), 56–76 (SLLF…SGAI), 80–100 (IGAK…AGLG), 114–134 (GGWG…IVGV), 142–162 (AIIL…LAGG), 171–191 (APFF…SFML), 214–234 (GLLT…ILLA), 249–269 (YVFF…APLV), 278–298 (SLVV…IWTD), 301–321 (TLII…NTIM), 339–359 (AYSS…GMLS), and 364–384 (ASTP…VLLM).

The protein belongs to the major facilitator superfamily.

The protein localises to the cell membrane. In terms of biological role, acts to efflux copper or a copper complex. It is possible that YfmO could contribute to copper resistance. This Bacillus subtilis (strain 168) protein is Multidrug efflux protein YfmO (yfmO).